The following is a 736-amino-acid chain: Phosphoribosylformylglycinamidine synthase subunit PurL (736 aa).

Residue His50 is part of the active site. 2 residues coordinate ATP: Tyr53 and Lys92. Mg(2+) is bound at residue Glu94. Substrate-binding positions include 95-98 and Arg117; that span reads SHNH. The active-site Proton acceptor is His96. Asp118 is a binding site for Mg(2+). Gln241 serves as a coordination point for substrate. Position 269 (Asp269) interacts with Mg(2+). 313-315 is a binding site for substrate; the sequence is ESQ. 2 residues coordinate ATP: Asp495 and Gly532. Asn533 provides a ligand contact to Mg(2+). Position 535 (Ser535) interacts with substrate.

The protein belongs to the FGAMS family. As to quaternary structure, monomer. Part of the FGAM synthase complex composed of 1 PurL, 1 PurQ and 2 PurS subunits.

Its subcellular location is the cytoplasm. The enzyme catalyses N(2)-formyl-N(1)-(5-phospho-beta-D-ribosyl)glycinamide + L-glutamine + ATP + H2O = 2-formamido-N(1)-(5-O-phospho-beta-D-ribosyl)acetamidine + L-glutamate + ADP + phosphate + H(+). It participates in purine metabolism; IMP biosynthesis via de novo pathway; 5-amino-1-(5-phospho-D-ribosyl)imidazole from N(2)-formyl-N(1)-(5-phospho-D-ribosyl)glycinamide: step 1/2. Part of the phosphoribosylformylglycinamidine synthase complex involved in the purines biosynthetic pathway. Catalyzes the ATP-dependent conversion of formylglycinamide ribonucleotide (FGAR) and glutamine to yield formylglycinamidine ribonucleotide (FGAM) and glutamate. The FGAM synthase complex is composed of three subunits. PurQ produces an ammonia molecule by converting glutamine to glutamate. PurL transfers the ammonia molecule to FGAR to form FGAM in an ATP-dependent manner. PurS interacts with PurQ and PurL and is thought to assist in the transfer of the ammonia molecule from PurQ to PurL. This Bartonella quintana (strain Toulouse) (Rochalimaea quintana) protein is Phosphoribosylformylglycinamidine synthase subunit PurL.